Consider the following 465-residue polypeptide: MEPRVGNKFRLGRKIGGGSFGEIYLGTNIQTNEEVAIKLENVKTKHPQLLYESKLYKVLQGGTGVPNVKWYGVEGDYNVLVIDLLGPSLEDLFNFCSRKLSLKTVLMLADQMINRIEFVHQKSFLHRDIKPDNFLMGLGRRANQVYVIDFGLAKKYRDSNHQHIPYRENKNLTGTARYASMNTHLGIEQSRRDDLESLGFVLMYFLKGSLPWQGLKAGNKKQKYEKISEKKVSTSIEALCRGYPSEFASYFHYCRSLRFDDKPDYAYLKRLFRDLFIREGFQFDYVFDWTILKYQQSQISTPPPRHHGPVVGPSSALPPAITSAERPSGGDEARPSGWSSGIPRRNSGQIFNSGSLAKQKAPVSSDPAISKDVVLSSSSFLRATGSSRRAAVSSSREAAVLGTDSEPSNPQIVEAGSGSNSKIPVSRNSPIVSSEINKLSSPSRATTSVMKNYEANLKGIESLHF.

Positions 9–277 constitute a Protein kinase domain; that stretch reads FRLGRKIGGG…LKRLFRDLFI (269 aa). ATP is bound by residues 15–23 and Lys-38; that span reads IGGGSFGEI. The active-site Proton acceptor is the Asp-128. 2 disordered regions span residues 300 to 344 and 396 to 428; these read STPP…GIPR and REAA…VSRN. Residues 405 to 428 show a composition bias toward polar residues; it reads SEPSNPQIVEAGSGSNSKIPVSRN.

This sequence belongs to the protein kinase superfamily. CK1 Ser/Thr protein kinase family. Casein kinase I subfamily. As to quaternary structure, monomer. Autophosphorylated.

It localises to the cytoplasm. The protein resides in the nucleus. It carries out the reaction L-seryl-[protein] + ATP = O-phospho-L-seryl-[protein] + ADP + H(+). The catalysed reaction is L-threonyl-[protein] + ATP = O-phospho-L-threonyl-[protein] + ADP + H(+). Its function is as follows. Casein kinases are operationally defined by their preferential utilization of acidic proteins such as caseins as substrates. It can phosphorylate a large number of proteins. This chain is Casein kinase 1-like protein 2, found in Arabidopsis thaliana (Mouse-ear cress).